The sequence spans 606 residues: Albumin A (606 aa).

The signal sequence occupies residues 1–18 (MKWITLICLLISSTLIES). The propeptide occupies 19–24 (RIIFKR). 3 consecutive Albumin domains span residues 22–211 (FKRD…ELMK), 212–401 (HSHS…RFMN), and 402–599 (EAKE…VLIE). His-30 is a binding site for Cu cation. 17 disulfide bridges follow: Cys-80-Cys-89, Cys-102-Cys-118, Cys-117-Cys-128, Cys-148-Cys-193, Cys-192-Cys-201, Cys-224-Cys-270, Cys-269-Cys-277, Cys-289-Cys-303, Cys-302-Cys-313, Cys-340-Cys-383, Cys-382-Cys-391, Cys-414-Cys-460, Cys-459-Cys-470, Cys-483-Cys-499, Cys-498-Cys-509, Cys-536-Cys-581, and Cys-580-Cys-589.

The protein belongs to the ALB/AFP/VDB family. As to expression, plasma.

It is found in the secreted. Binds water, Ca(2+), Na(+), K(+), fatty acids, hormones, bilirubin and drugs. Its main function is the regulation of the colloidal osmotic pressure of blood. The polypeptide is Albumin A (alb-a) (Xenopus laevis (African clawed frog)).